Here is a 245-residue protein sequence, read N- to C-terminus: Large ribosomal subunit protein uL3 (245 aa).

Glutamine 151 bears the N5-methylglutamine mark. Residues 214-245 (KDAPQPGKYRLANSAAPQPAEADAASDTGAQA) form a disordered region. A compositionally biased stretch (low complexity) spans 225-245 (ANSAAPQPAEADAASDTGAQA).

This sequence belongs to the universal ribosomal protein uL3 family. Part of the 50S ribosomal subunit. Forms a cluster with proteins L14 and L19. Methylated by PrmB.

In terms of biological role, one of the primary rRNA binding proteins, it binds directly near the 3'-end of the 23S rRNA, where it nucleates assembly of the 50S subunit. This is Large ribosomal subunit protein uL3 from Methylocella silvestris (strain DSM 15510 / CIP 108128 / LMG 27833 / NCIMB 13906 / BL2).